The primary structure comprises 195 residues: Transcriptional regulator GfcR (195 aa).

It belongs to the purine/pyrimidine phosphoribosyltransferase family. GfcR subfamily.

In Picrophilus torridus (strain ATCC 700027 / DSM 9790 / JCM 10055 / NBRC 100828 / KAW 2/3), this protein is Transcriptional regulator GfcR.